The chain runs to 289 residues: ATP synthase gamma chain (289 aa).

The protein belongs to the ATPase gamma chain family. F-type ATPases have 2 components, CF(1) - the catalytic core - and CF(0) - the membrane proton channel. CF(1) has five subunits: alpha(3), beta(3), gamma(1), delta(1), epsilon(1). CF(0) has three main subunits: a, b and c.

The protein resides in the cell inner membrane. Its function is as follows. Produces ATP from ADP in the presence of a proton gradient across the membrane. The gamma chain is believed to be important in regulating ATPase activity and the flow of protons through the CF(0) complex. The chain is ATP synthase gamma chain from Azobacteroides pseudotrichonymphae genomovar. CFP2.